Reading from the N-terminus, the 458-residue chain is Flap endonuclease 1 (458 aa).

Residues 1 to 105 (MGIKGLTGLL…GVLSKRFEKR (105 aa)) form an N-domain region. Position 34 (Asp34) interacts with Mg(2+). The DNA site is built by Arg47 and Arg71. Residues Asp87, Glu159, Glu161, Asp180, and Asp182 each contribute to the Mg(2+) site. The interval 123–254 (DVDRFSRRTV…KSALKLIREF (132 aa)) is I-domain. Glu159 contributes to the DNA binding site. Residues Gly232 and Asp234 each contribute to the DNA site. Position 234 (Asp234) interacts with Mg(2+). Disordered regions lie at residues 268-347 (AAAR…IPDE) and 416-458 (GFFT…AKKK). Composition is skewed to acidic residues over residues 275–285 (AEEEDEEEAEE) and 293–309 (EMPD…DEEE). Basic and acidic residues predominate over residues 310–329 (AERRKKAEAAKKKKAQEKAK). Residues 410–418 (QQGRLDGFF) are interaction with PCNA. Positions 442 to 452 (RKGEDKAEGSG) are enriched in basic and acidic residues.

Belongs to the XPG/RAD2 endonuclease family. FEN1 subfamily. Interacts with PCNA. Three molecules of FEN1 bind to one PCNA trimer with each molecule binding to one PCNA monomer. PCNA stimulates the nuclease activity without altering cleavage specificity. It depends on Mg(2+) as a cofactor. In terms of processing, phosphorylated. Phosphorylation upon DNA damage induces relocalization to the nuclear plasma.

It localises to the nucleus. The protein resides in the nucleolus. The protein localises to the nucleoplasm. It is found in the mitochondrion. Its function is as follows. Structure-specific nuclease with 5'-flap endonuclease and 5'-3' exonuclease activities involved in DNA replication and repair. During DNA replication, cleaves the 5'-overhanging flap structure that is generated by displacement synthesis when DNA polymerase encounters the 5'-end of a downstream Okazaki fragment. It enters the flap from the 5'-end and then tracks to cleave the flap base, leaving a nick for ligation. Also involved in the long patch base excision repair (LP-BER) pathway, by cleaving within the apurinic/apyrimidinic (AP) site-terminated flap. Acts as a genome stabilization factor that prevents flaps from equilibrating into structures that lead to duplications and deletions. Also possesses 5'-3' exonuclease activity on nicked or gapped double-stranded DNA, and exhibits RNase H activity. Also involved in replication and repair of rDNA and in repairing mitochondrial DNA. This Coprinopsis cinerea (strain Okayama-7 / 130 / ATCC MYA-4618 / FGSC 9003) (Inky cap fungus) protein is Flap endonuclease 1.